Here is a 284-residue protein sequence, read N- to C-terminus: MKLDGYTRLAAVVANPIKHSISPFIHNRAFEATATNGAYVAWEIEASDLAETVANIRRYQMFGINLSMPYKEQVIPYLDELSDEARLIGAVNTVVNENGNLIGYNTDGKGFFKCLPSFTISGKKMTLLGAGGAAKSILAQAILDGVSQISVFVRSVSMEKTRPYLDKLQEQTGFKVDLCALEYVSELQARIAESDLLVNATSVGMDGQSSPVPENIVLPETLLVADIIYQPFETPFLKWARSQGNPAVNGLGMLLYQAAEAFQLWTGKEMPTEEIWQSLTEKYQ.

Shikimate contacts are provided by residues 20–22 and Ser67; that span reads SIS. Residue Lys71 is the Proton acceptor of the active site. Asp83 contributes to the NADP(+) binding site. Shikimate contacts are provided by Asn92 and Asp107. NADP(+)-binding positions include 129–133 and Ile227; that span reads GAGGA. Tyr229 contacts shikimate. Gly250 contacts NADP(+).

This sequence belongs to the shikimate dehydrogenase family. As to quaternary structure, homodimer.

The enzyme catalyses shikimate + NADP(+) = 3-dehydroshikimate + NADPH + H(+). It functions in the pathway metabolic intermediate biosynthesis; chorismate biosynthesis; chorismate from D-erythrose 4-phosphate and phosphoenolpyruvate: step 4/7. Involved in the biosynthesis of the chorismate, which leads to the biosynthesis of aromatic amino acids. Catalyzes the reversible NADPH linked reduction of 3-dehydroshikimate (DHSA) to yield shikimate (SA). The sequence is that of Shikimate dehydrogenase (NADP(+)) from Streptococcus pneumoniae (strain CGSP14).